The following is a 389-amino-acid chain: Cuticlin-3 (389 aa).

The signal sequence occupies residues methionine 1–alanine 19. Residues isoleucine 20–serine 354 are Extracellular-facing. One can recognise a ZP domain in the interval glutamate 33–glycine 278. N-linked (GlcNAc...) asparagine glycosylation occurs at asparagine 284. The chain crosses the membrane as a helical span at residues valine 355–valine 375. The Cytoplasmic segment spans residues serine 376–cysteine 389.

Its subcellular location is the cell membrane. Plays a role in alae formation in L1 larvae. The chain is Cuticlin-3 from Caenorhabditis elegans.